A 155-amino-acid chain; its full sequence is 3-hydroxyacyl-[acyl-carrier-protein] dehydratase FabZ (155 aa).

Histidine 59 is an active-site residue.

It belongs to the thioester dehydratase family. FabZ subfamily.

It localises to the cytoplasm. The enzyme catalyses a (3R)-hydroxyacyl-[ACP] = a (2E)-enoyl-[ACP] + H2O. Involved in unsaturated fatty acids biosynthesis. Catalyzes the dehydration of short chain beta-hydroxyacyl-ACPs and long chain saturated and unsaturated beta-hydroxyacyl-ACPs. The sequence is that of 3-hydroxyacyl-[acyl-carrier-protein] dehydratase FabZ from Bartonella henselae (strain ATCC 49882 / DSM 28221 / CCUG 30454 / Houston 1) (Rochalimaea henselae).